Here is a 462-residue protein sequence, read N- to C-terminus: Transcription factor-like protein EUC1 (462 aa).

Disordered stretches follow at residues 11–43 (GFGG…TTSP) and 66–97 (RPTD…GRIK). Residues Ser-17 and Ser-23 each carry the phosphoserine modification. Residues 26–35 (DSERRNHDLG) are compositionally biased toward basic and acidic residues. Positions 81–140 (SASATEPTNRIGPGRIKETPETNFNAFLIAQLTRMEEQNANLKEEISLMKKEQELFFLEN) are homodimerization region. Residues 105-135 (NAFLIAQLTRMEEQNANLKEEISLMKKEQEL) adopt a coiled-coil conformation. Disordered stretches follow at residues 190-214 (QEAA…STNW) and 226-289 (GDPR…RNRR). Residues 197–214 (NPSTSTQAHQSQSRSTNW) are compositionally biased toward polar residues. Lys-231 is covalently cross-linked (Glycyl lysine isopeptide (Lys-Gly) (interchain with G-Cter in SUMO)). Residues Ser-237 and Ser-249 each carry the phosphoserine modification. Positions 240-251 (ENGEYDGNESDE) are enriched in acidic residues. The span at 252-282 (NATTRNLPLNNPDSVSNADDSNNQLDGTGNE) shows a compositional bias: polar residues. Thr-254 carries the phosphothreonine modification. Positions 296–385 (YKLNRAIQNV…QAIKVVENIR (90 aa)) are GCR1 DNA-binding region. The span at 441–455 (SLQQPHSIPNSSTGT) shows a compositional bias: polar residues. The disordered stretch occupies residues 441–462 (SLQQPHSIPNSSTGTPEHDQDT).

As to quaternary structure, homodimer. Interacts with SLX5. Post-translationally, sumoylated at Lys-231 and subsequently ubiquitinated by the SUMO-targeted ubiquitin ligase (STUbL) complex SLX5/SLX8.

Its subcellular location is the chromosome. In terms of biological role, transcription factor-like protein that binds to specific DNA motifs called ub-HS-motif associated with several locations where proteins other than histone H2B are ubiquitinated (ub-hotspots). Ubiquitination at these sites depends on the SUMO-targeted ubiquitin ligase (STUbL) complex SLX5/SLX8 and protein turnover on the CDC48 segregase. UBC9, SIZ1, or SIZ2 sumoylate DNA-bound EUC1 to stabilize its DNA-binding. Sumoylated EUC1 acts a cofactor required for the recruitment of the SLX5/SLX8 STUbL complex via specific contacts between EUC1 and SLX5, as well as an additional SUMO-mediated interaction. SLX5/SLX8 then ubiquitinates EUC1 and presumably other targets at ub-hotspots, and the CDC48/UFD1/NPL4 complex, together with UBX4 and UBX5, removes Lys-48-linked ubiquitinated proteins from chromatin. Ubiquitinated proteins could be either degraded by the proteasome or recycled by deubiquitination. EUC1 itself does not seem to underlie extensive turnover, as it is a very stable protein. EUC1 is able to act as a transcription factor, but its function at ub-hotspots does not seem to depend on this ability. EUC1-mediated ub-hotspots are crucial during stress responses when gene expression control is impaired. This is Transcription factor-like protein EUC1 from Saccharomyces cerevisiae (strain ATCC 204508 / S288c) (Baker's yeast).